The following is a 490-amino-acid chain: Glutamyl-tRNA(Gln) amidotransferase subunit A (490 aa).

Residues K78 and S153 each act as charge relay system in the active site. Residue S177 is the Acyl-ester intermediate of the active site.

The protein belongs to the amidase family. GatA subfamily. In terms of assembly, heterotrimer of A, B and C subunits.

The enzyme catalyses L-glutamyl-tRNA(Gln) + L-glutamine + ATP + H2O = L-glutaminyl-tRNA(Gln) + L-glutamate + ADP + phosphate + H(+). In terms of biological role, allows the formation of correctly charged Gln-tRNA(Gln) through the transamidation of misacylated Glu-tRNA(Gln) in organisms which lack glutaminyl-tRNA synthetase. The reaction takes place in the presence of glutamine and ATP through an activated gamma-phospho-Glu-tRNA(Gln). This Desulforapulum autotrophicum (strain ATCC 43914 / DSM 3382 / VKM B-1955 / HRM2) (Desulfobacterium autotrophicum) protein is Glutamyl-tRNA(Gln) amidotransferase subunit A.